Reading from the N-terminus, the 276-residue chain is Undecaprenyl-diphosphatase (276 aa).

Helical transmembrane passes span 48 to 68, 92 to 112, 119 to 139, 155 to 175, 196 to 216, 229 to 249, and 255 to 275; these read AANS…AIVF, LTIA…FLFE, LFSV…MLIA, ITYK…WPGF, ADFT…LKLV, FFLV…KFFL, and IKLV…IMLV.

Belongs to the UppP family.

It localises to the cell membrane. It carries out the reaction di-trans,octa-cis-undecaprenyl diphosphate + H2O = di-trans,octa-cis-undecaprenyl phosphate + phosphate + H(+). Catalyzes the dephosphorylation of undecaprenyl diphosphate (UPP). Confers resistance to bacitracin. This chain is Undecaprenyl-diphosphatase, found in Bacillus velezensis (strain DSM 23117 / BGSC 10A6 / LMG 26770 / FZB42) (Bacillus amyloliquefaciens subsp. plantarum).